We begin with the raw amino-acid sequence, 217 residues long: tRNA (guanine-N(7)-)-methyltransferase (217 aa).

Positions 43, 68, 101, and 123 each coordinate S-adenosyl-L-methionine. Residue Lys-127 coordinates substrate. Positions 129–134 are interaction with RNA; sequence KHNKRR. Substrate-binding positions include Asp-159 and 196–199; that span reads TEYE.

The protein belongs to the class I-like SAM-binding methyltransferase superfamily. TrmB family.

The enzyme catalyses guanosine(46) in tRNA + S-adenosyl-L-methionine = N(7)-methylguanosine(46) in tRNA + S-adenosyl-L-homocysteine. Its pathway is tRNA modification; N(7)-methylguanine-tRNA biosynthesis. Functionally, catalyzes the formation of N(7)-methylguanine at position 46 (m7G46) in tRNA. In Clostridium botulinum (strain Okra / Type B1), this protein is tRNA (guanine-N(7)-)-methyltransferase.